The chain runs to 424 residues: MTTLRIRGGRPLQGTIRVGGRKNATLPLIAATLLADGTSRLENVPQIHDVMVYRKLLTGLGARVDWDPVHGILTVHTGGVRPGEPDYHLASSIRASYYLLGVMLARYGEASVPMPGGDNIGHRPVDQHFKGLSALGAEIWMDRGIIRARARRLRGAHVYLDIISVGATIQVMLAASLAEGTTVIQNCAREPHVVAVANFINACGGKVTGAGTDTIRVRGVDRLVGATQTVIPDDIEAGTWMMAAAMTQGDVTLQNVIPTHITPIMAKLREAGVEVHELGDAVRVVGRERPKAINVKTLPYPGFPTDAQSQMTALLSLAEGTSYITETLYEDRFRFVPELVRMGAQIRVEGRTAIVKGVEQLYGAPVEATDIRAGAALVIAGLAAEGETTIYGMEHVQRGYEKLEQKLLALGADVQMERQGAAVV.

22 to 23 (KN) provides a ligand contact to phosphoenolpyruvate. Arg-94 lines the UDP-N-acetyl-alpha-D-glucosamine pocket. Catalysis depends on Asp-118, which acts as the Proton donor. Residues 123–127 (RPVDQ), Asp-306, and Leu-328 contribute to the UDP-N-acetyl-alpha-D-glucosamine site.

Belongs to the EPSP synthase family. MurA subfamily.

It localises to the cytoplasm. The catalysed reaction is phosphoenolpyruvate + UDP-N-acetyl-alpha-D-glucosamine = UDP-N-acetyl-3-O-(1-carboxyvinyl)-alpha-D-glucosamine + phosphate. The protein operates within cell wall biogenesis; peptidoglycan biosynthesis. Cell wall formation. Adds enolpyruvyl to UDP-N-acetylglucosamine. This Symbiobacterium thermophilum (strain DSM 24528 / JCM 14929 / IAM 14863 / T) protein is UDP-N-acetylglucosamine 1-carboxyvinyltransferase 3.